A 52-amino-acid polypeptide reads, in one-letter code: uncharacterized protein (52 aa).

This is an uncharacterized protein from Haemophilus influenzae (strain ATCC 51907 / DSM 11121 / KW20 / Rd).